Consider the following 262-residue polypeptide: Global transcriptional regulator CodY (262 aa).

The segment at 1–159 (MAHLLEKTRK…ASTVVGIQLL (159 aa)) is GAF domain. Residues 207 to 226 (ASVIADRIGITRSVIVNALR) constitute a DNA-binding region (H-T-H motif).

Belongs to the CodY family.

The protein resides in the cytoplasm. DNA-binding global transcriptional regulator which is involved in the adaptive response to starvation and acts by directly or indirectly controlling the expression of numerous genes in response to nutrient availability. During rapid exponential growth, CodY is highly active and represses genes whose products allow adaptation to nutrient depletion. In Streptococcus pneumoniae (strain ATCC BAA-255 / R6), this protein is Global transcriptional regulator CodY.